We begin with the raw amino-acid sequence, 269 residues long: GTP cyclohydrolase FolE2 (269 aa).

This sequence belongs to the GTP cyclohydrolase IV family.

It carries out the reaction GTP + H2O = 7,8-dihydroneopterin 3'-triphosphate + formate + H(+). The protein operates within cofactor biosynthesis; 7,8-dihydroneopterin triphosphate biosynthesis; 7,8-dihydroneopterin triphosphate from GTP: step 1/1. Functionally, converts GTP to 7,8-dihydroneopterin triphosphate. The protein is GTP cyclohydrolase FolE2 of Thiobacillus denitrificans (strain ATCC 25259 / T1).